The chain runs to 429 residues: Inner membrane transport protein RhmT (429 aa).

Topologically, residues 1–16 are cytoplasmic; that stretch reads MSTALLDAVVKKNRVR. Residues 17 to 37 form a helical membrane-spanning segment; it reads LIPFMLALYVLAFLDRSNIGF. The Periplasmic portion of the chain corresponds to 38-54; it reads AKQTYQIDTGLSNEAYA. Residues 55-75 form a helical membrane-spanning segment; the sequence is LGAGIFFVVYAFLGVPANLLM. The Cytoplasmic portion of the chain corresponds to 76–81; that stretch reads RKLGAR. Residues 82–102 form a helical membrane-spanning segment; that stretch reads TWIGTTTLLWGFLSAAMAWAD. The Periplasmic segment spans residues 103-143; that stretch reads TEAKFLIVRTLLRAAEAGFFPGMIYLTSQWFPQRNRASIMG. The chain crosses the membrane as a helical span at residues 144 to 164; it reads LFYMGAPLALTLGSPLSGALL. Residues 165-174 lie on the Cytoplasmic side of the membrane; it reads EMHGFMGHPG. A helical transmembrane segment spans residues 175 to 195; that stretch reads WFWMFVIEGLLAVGAGVFTFF. Residues 196 to 242 are Periplasmic-facing; it reads WLDDTPEQARFLSKQEKTLLINQLASEEQQKVTSRLSDALRNGRVWQ. A helical transmembrane segment spans residues 243–263; sequence LAIIYLTIQVAVYGLIFFLPT. The Cytoplasmic portion of the chain corresponds to 264–274; sequence QVAALLGTKVG. Residues 275 to 295 form a helical membrane-spanning segment; sequence FTASVVTAIPWVAALFGTWLI. Residues 296 to 324 are Periplasmic-facing; that stretch reads PRYSDKTGERRNVAALTLLAAGIGIGLSG. The helical transmembrane segment at 325-345 threads the bilayer; the sequence is LLSPVMAIVALCVAAIGFIAV. Residues 346–361 lie on the Cytoplasmic side of the membrane; the sequence is QPVFWTMPTQLLSGTA. Residues 362-382 traverse the membrane as a helical segment; that stretch reads LAAGIGFVNLFGAVGGFIAPI. The Periplasmic segment spans residues 383-394; the sequence is LRVKAETLFASD. A helical membrane pass occupies residues 395-415; the sequence is AAGLLTLAAVAVIGSLIIFTL. At 416–429 the chain is on the cytoplasmic side; it reads RVNRTVAQTDVAHH.

Belongs to the major facilitator superfamily. Phthalate permease family.

Its subcellular location is the cell inner membrane. The polypeptide is Inner membrane transport protein RhmT (rhmT) (Escherichia coli (strain K12)).